Here is a 333-residue protein sequence, read N- to C-terminus: B3 domain-containing protein At1g32030 (333 aa).

Composition is skewed to polar residues over residues Val-76–Asp-99 and Pro-134–Leu-143. The tract at residues Val-76–Tyr-179 is disordered. A DNA-binding region (TF-B3) is located at residues Gln-220–Pro-328.

It localises to the nucleus. This is B3 domain-containing protein At1g32030 from Arabidopsis thaliana (Mouse-ear cress).